A 209-amino-acid polypeptide reads, in one-letter code: Redox-sensing transcriptional repressor Rex (209 aa).

The H-T-H motif DNA-binding region spans 16 to 55; that stretch reads VYIQVLTGLKRDGVEVISSEKLARACSVNPSQIRKDLAYF. 90–95 lines the NAD(+) pocket; sequence GVGNLG.

It belongs to the transcriptional regulatory Rex family. Homodimer.

The protein localises to the cytoplasm. In terms of biological role, modulates transcription in response to changes in cellular NADH/NAD(+) redox state. The sequence is that of Redox-sensing transcriptional repressor Rex from Maridesulfovibrio salexigens (strain ATCC 14822 / DSM 2638 / NCIMB 8403 / VKM B-1763) (Desulfovibrio salexigens).